The sequence spans 546 residues: Chaperonin GroEL 4 (546 aa).

Residues 30-33, lysine 51, 87-91, glycine 415, and aspartate 496 contribute to the ATP site; these read TLGP and DGTTT.

This sequence belongs to the chaperonin (HSP60) family. As to quaternary structure, forms a cylinder of 14 subunits composed of two heptameric rings stacked back-to-back. Interacts with the co-chaperonin GroES.

The protein localises to the cytoplasm. The catalysed reaction is ATP + H2O + a folded polypeptide = ADP + phosphate + an unfolded polypeptide.. In terms of biological role, together with its co-chaperonin GroES, plays an essential role in assisting protein folding. The GroEL-GroES system forms a nano-cage that allows encapsulation of the non-native substrate proteins and provides a physical environment optimized to promote and accelerate protein folding. The sequence is that of Chaperonin GroEL 4 from Bradyrhizobium sp. (strain BTAi1 / ATCC BAA-1182).